Here is a 782-residue protein sequence, read N- to C-terminus: General transcription and DNA repair factor IIH helicase/translocase subunit XPB (782 aa).

Residues 1–11 show a composition bias toward basic and acidic residues; that stretch reads MGKRDRADRDK. Disordered stretches follow at residues 1–51 and 220–240; these read MGKR…ESGT and ISKT…DPQG. The Nuclear localization signal signature appears at 6 to 18; it reads RADRDKKKSRKRH. Residues 21–30 are compositionally biased toward acidic residues; that stretch reads DEEDDEEDAP. The Helicase ATP-binding domain maps to 327-488; sequence MFGNGRARSG…DLNFLIGPKL (162 aa). 340 to 347 provides a ligand contact to ATP; that stretch reads LPCGAGKS. The short motif at 441–444 is the DEVH box element; the sequence is DEVH. One can recognise a Helicase C-terminal domain in the interval 542–702; that stretch reads RACQFLIKFH…LAGMEEEDLA (161 aa). S686 is subject to Phosphoserine. At S751 the chain carries Phosphoserine; by CK2.

It belongs to the helicase family. RAD25/XPB subfamily. As to quaternary structure, component of the 7-subunit TFIIH core complex composed of XPB/ERCC3, XPD/ERCC2, GTF2H1, GTF2H2, GTF2H3, GTF2H4 and GTF2H5, which is active in NER. The core complex associates with the 3-subunit CDK-activating kinase (CAK) module composed of CCNH/cyclin H, CDK7 and MNAT1 to form the 10-subunit holoenzyme (holo-TFIIH) active in transcription. Interacts with PUF60. Interacts with ATF7IP. Interacts with KAT2A; leading to KAT2A recruitment to promoters and acetylation of histones. Part of TBP-based Pol II pre-initiation complex (PIC), in which Pol II core assembles with general transcription factors and other specific initiation factors including GTF2E1, GTF2E2, GTF2F1, GTF2F2, TCEA1, ERCC2, ERCC3, GTF2H2, GTF2H3, GTF2H4, GTF2H5, GTF2A1, GTF2A2, GTF2B and TBP; this large multi-subunit PIC complex mediates DNA unwinding and targets Pol II core to the transcription start site where the first phosphodiester bond forms. Post-translationally, phosphorylation on Ser-751 by CK2 controls the 5'-excision activity of ERCC1-XPF endonuclease; phosphorylated protein inhibits the excision activity and thus NER. Dephosphorylation reactivates the 5'-excision step. Phosphorylation has no effect on transcription or the 3'-5' helicase activity.

The protein localises to the nucleus. It catalyses the reaction Couples ATP hydrolysis with the unwinding of duplex DNA by translocating in the 3'-5' direction.. The catalysed reaction is ATP + H2O = ADP + phosphate + H(+). Its activity is regulated as follows. Phosphorylation on Ser-751 by CK2 controls the 5'-excision activity of ERCC1-XPF endonuclease; phosphorylated protein inhibits the excision activity and thus NER. ATPase activity is stimulated by TFIIH subunit p52 (GTF2H4). DNA translocase activity by this subunit in TFIIH is stimulated by XPA, ERCC5/XPG and XFP plus ERCC1. Its function is as follows. ATP-dependent 3'-5' DNA helicase/translocase; binds dsDNA rather than ssDNA, unzipping it in a translocase rather than classical helicase activity. Component of the general transcription and DNA repair factor IIH (TFIIH) core complex. When complexed to CDK-activating kinase (CAK), involved in RNA transcription by RNA polymerase II. The ATPase activity of XPB/ERCC3, but not its helicase activity, is required for DNA opening; it may wrap around the damaged DNA wedging it open, causing localized melting and twisting that allows XPD/ERCC2 helicase to anchor. The ATP-dependent helicase activity of XPB/ERCC3 may be required for promoter escape. Also involved in transcription-coupled nucleotide excision repair (NER) of damaged DNA. In NER, TFIIH acts by opening DNA around the lesion to allow the excision of the damaged oligonucleotide and its replacement by a new DNA fragment. The structure of the TFIIH transcription complex differs from the NER-TFIIH complex; large movements by XPD/ERCC2 and XPB/ERCC3 are stabilized by XPA. The protein is General transcription and DNA repair factor IIH helicase/translocase subunit XPB (ERCC3) of Macaca fascicularis (Crab-eating macaque).